A 241-amino-acid polypeptide reads, in one-letter code: ATP synthase subunit a (241 aa).

The next 5 helical transmembrane spans lie at 30–50, 89–109, 128–148, 193–213, and 214–234; these read GQIFLSSWILIGALLAFVLVG, LPFIGTLFLFIFVSNWGGALI, INTTVAMALLVTLAYFYAGLS, LAVGVLVYLVPLIVPLPVMLL, and GLFTSAIQALIFATLAAFYIG.

Belongs to the ATPase A chain family. F-type ATPases have 2 components, CF(1) - the catalytic core - and CF(0) - the membrane proton channel. CF(1) has five subunits: alpha(3), beta(3), gamma(1), delta(1), epsilon(1). CF(0) has four main subunits: a, b, b' and c.

Its subcellular location is the cellular thylakoid membrane. In terms of biological role, key component of the proton channel; it plays a direct role in the translocation of protons across the membrane. The chain is ATP synthase subunit a from Synechococcus sp. (strain CC9311).